The chain runs to 289 residues: ATP synthase subunit a (289 aa).

Transmembrane regions (helical) follow at residues 43–63, 101–121, 160–180, 193–213, 232–252, and 259–279; these read AFHVDTLGWSVALGLIFVLIF, SAVIAPLALTIFVWVFLMNAV, LSVFALIIFYSIKVKGIGGFI, IFVQALLIPVNFLLEFVTLIA, VFILIAVMFGSGLLWLSGLGI, and AVFHILIITLQAFIFMMLTIV.

It belongs to the ATPase A chain family. F-type ATPases have 2 components, CF(1) - the catalytic core - and CF(0) - the membrane proton channel. CF(1) has five subunits: alpha(3), beta(3), gamma(1), delta(1), epsilon(1). CF(0) has three main subunits: a(1), b(2) and c(9-12). The alpha and beta chains form an alternating ring which encloses part of the gamma chain. CF(1) is attached to CF(0) by a central stalk formed by the gamma and epsilon chains, while a peripheral stalk is formed by the delta and b chains.

The protein localises to the cell inner membrane. Its function is as follows. Key component of the proton channel; it plays a direct role in the translocation of protons across the membrane. In Pseudomonas syringae pv. tomato (strain ATCC BAA-871 / DC3000), this protein is ATP synthase subunit a.